A 705-amino-acid polypeptide reads, in one-letter code: Kinesin-like protein KIF2A (705 aa).

The disordered stretch occupies residues 65–185 (DLVPDEDIEP…QQELREKRAQ (121 aa)). Phosphoserine is present on S75. At T96 the chain carries Phosphothreonine. Residue S99 is modified to Phosphoserine. Residue K101 is modified to N6-acetyllysine. Positions 122–139 (LPEQSSSAQQNGSVSDIS) are enriched in polar residues. 2 positions are modified to phosphoserine: S134 and S139. Residues 153-186 (RRKSNCVKEVEKLQEKREKRRLQQQELREKRAQD) adopt a coiled-coil conformation. Basic and acidic residues predominate over residues 158–185 (CVKEVEKLQEKREKRRLQQQELREKRAQ). Positions 222–552 (RICVCVRKRP…LRYANRVKEL (331 aa)) constitute a Kinesin motor domain. Position 312 to 319 (312 to 319 (GQTGSGKT)) interacts with ATP. Phosphoserine is present on Q572. Positions 659–698 (ATQLEAILEQKIDILTELRDKVKSFRAALQEEEQASKQIN) form a coiled coil.

This sequence belongs to the TRAFAC class myosin-kinesin ATPase superfamily. Kinesin family. MCAK/KIF2 subfamily. As to quaternary structure, interacts with AURKA and PLK1. Interacts with PSRC1. Interacts with MCRS1; the interaction enhances recruitment of KIF2A to the minus ends of spindle microtubules which promotes chromosome alignment.

The protein resides in the cytoplasm. The protein localises to the cytoskeleton. It localises to the microtubule organizing center. It is found in the centrosome. Its subcellular location is the spindle pole. The protein resides in the spindle. In terms of biological role, plus end-directed microtubule-dependent motor required for normal brain development. May regulate microtubule dynamics during axonal growth. Required for normal progression through mitosis. Required for normal congress of chromosomes at the metaphase plate. Required for normal spindle dynamics during mitosis. Promotes spindle turnover. Implicated in formation of bipolar mitotic spindles. Has microtubule depolymerization activity. The chain is Kinesin-like protein KIF2A from Rattus norvegicus (Rat).